The chain runs to 1106 residues: Protein kinase C (1106 aa).

One can recognise an REM-1 1 domain in the interval 1 to 67 (MDGDDLIASV…MRELQLRQMK (67 aa)). The tract at residues 65–138 (QMKQEGASPT…PRPFAPVPKA (74 aa)) is disordered. The span at 79–93 (PPNPDGSAPVPPPKD) shows a compositional bias: pro residues. Positions 149-226 (KYDTPYLGPK…LKRYEDLHVD (78 aa)) constitute an REM-1 2 domain. The 119-residue stretch at 232-350 (APDDESLSTP…MRRKKIESEF (119 aa)) folds into the C2 domain. Over residues 361-370 (MEHGAAHGRQ) the composition is skewed to basic and acidic residues. A disordered region spans residues 361–400 (MEHGAAHGRQDAGGAPGSSNRPPSGGHSGGPGQGYAGGAP). Positions 386-400 (GHSGGPGQGYAGGAP) are enriched in gly residues. 2 Phorbol-ester/DAG-type zinc fingers span residues 460–508 (GHKF…VTKC) and 528–578 (PHRF…PDFC). 2 stretches are compositionally biased toward polar residues: residues 600–609 (KSASVSSGLS) and 658–668 (YIPPQSPTAAQ). Disordered regions lie at residues 600–625 (KSAS…PQDN) and 658–719 (YIPP…HAHY). Residues 683–693 (AAAAAAAAAAA) are compositionally biased toward low complexity. The region spanning 781-1040 (FNFLAVLGKG…AQEVMSHAFF (260 aa)) is the Protein kinase domain. ATP-binding positions include 787-795 (LGKGNFGKV) and Lys-810. The active-site Proton acceptor is the Asp-906. An AGC-kinase C-terminal domain is found at 1041–1106 (RNINWDDIYH…RGFSYTADFA (66 aa)). Thr-1082 carries the post-translational modification Phosphothreonine. Position 1100 is a phosphoserine (Ser-1100). A Phosphotyrosine modification is found at Tyr-1101.

It belongs to the protein kinase superfamily. AGC Ser/Thr protein kinase family. PKC subfamily. In terms of assembly, interacts with hsp90.

The enzyme catalyses L-seryl-[protein] + ATP = O-phospho-L-seryl-[protein] + ADP + H(+). The catalysed reaction is L-threonyl-[protein] + ATP = O-phospho-L-threonyl-[protein] + ADP + H(+). In terms of biological role, protein kinase C; part of cell wall integrity (CWI) signaling pathway composed of pkcA, the bck1-mkk2-mpka MAPK cascade and the downstream rlmA transcription regulator. The CWI signaling pathway regulates cell wall integrity and pyomelanin formation. CWI also controls oxidative stress response, gliotoxin production, iron adaptation and asexual development. Finally, CWI is constitutively required for A.fumigatus to cope with the temperature increase found in the mammalian lung environment, during infection. Modulates the expression of fumiquinazoline cluster during conidiogenesis. This chain is Protein kinase C, found in Aspergillus fumigatus (strain ATCC MYA-4609 / CBS 101355 / FGSC A1100 / Af293) (Neosartorya fumigata).